A 288-amino-acid chain; its full sequence is Acetyl-coenzyme A carboxylase carboxyl transferase subunit beta (288 aa).

A CoA carboxyltransferase N-terminal domain is found at 34–288 (LFSKCPACKV…RLLRMHGGVR (255 aa)). Zn(2+) contacts are provided by C38, C41, C56, and C59. Residues 38–59 (CPACKVILYKNDLGLEKTCQHC) form a C4-type zinc finger.

Belongs to the AccD/PCCB family. As to quaternary structure, acetyl-CoA carboxylase is a heterohexamer composed of biotin carboxyl carrier protein (AccB), biotin carboxylase (AccC) and two subunits each of ACCase subunit alpha (AccA) and ACCase subunit beta (AccD). Requires Zn(2+) as cofactor.

Its subcellular location is the cytoplasm. The enzyme catalyses N(6)-carboxybiotinyl-L-lysyl-[protein] + acetyl-CoA = N(6)-biotinyl-L-lysyl-[protein] + malonyl-CoA. The protein operates within lipid metabolism; malonyl-CoA biosynthesis; malonyl-CoA from acetyl-CoA: step 1/1. In terms of biological role, component of the acetyl coenzyme A carboxylase (ACC) complex. Biotin carboxylase (BC) catalyzes the carboxylation of biotin on its carrier protein (BCCP) and then the CO(2) group is transferred by the transcarboxylase to acetyl-CoA to form malonyl-CoA. The polypeptide is Acetyl-coenzyme A carboxylase carboxyl transferase subunit beta (Streptococcus suis (strain 98HAH33)).